The sequence spans 247 residues: UPF0612 protein P20C8.01c (247 aa).

2 coiled-coil regions span residues 27-63 and 138-225; these read IKRY…MKYE and DTVQ…DARS.

This sequence belongs to the UPF0612 family.

Its subcellular location is the cytoplasm. This is UPF0612 protein P20C8.01c from Schizosaccharomyces pombe (strain 972 / ATCC 24843) (Fission yeast).